We begin with the raw amino-acid sequence, 114 residues long: NLP effector protein 1 (114 aa).

The protein belongs to the Necrosis inducing protein (NPP1) family.

It localises to the secreted. It is found in the host cytoplasm. In terms of biological role, probable secreted effector that may act as a pathogen-associated molecular pattern (PAMP) recognized by the plant immune system. Seems not to induce necrosis, neither in several susceptible or resistant Vitis species nor in the dicot model plant Nicotiana benthamiana. The chain is NLP effector protein 1 from Plasmopara viticola (Downy mildew of grapevine).